The sequence spans 306 residues: Protein SEC13 homolog (306 aa).

6 WD repeats span residues 11–50 (QHRD…QSYP), 56–97 (GHNG…WQKT), 102–143 (THEA…QQWQ), 150–195 (CHDQ…NEWT), 202–245 (CHKD…TAEW), and 252–291 (QAPC…QWIK).

The protein belongs to the WD repeat SEC13 family. Probably part of the GATOR complex.

It is found in the cytoplasmic vesicle. The protein localises to the COPII-coated vesicle membrane. It localises to the endoplasmic reticulum membrane. The protein resides in the nucleus. Its subcellular location is the nuclear pore complex. It is found in the lysosome membrane. In terms of biological role, functions as a component of the nuclear pore complex (NPC) and the COPII coat. As a component of the GATOR complex may function in the amino acid-sensing branch of the TORC1 signaling pathway. The protein is Protein SEC13 homolog of Caenorhabditis briggsae.